The following is a 153-amino-acid chain: Ribosome maturation factor RimP (153 aa).

This sequence belongs to the RimP family.

The protein localises to the cytoplasm. In terms of biological role, required for maturation of 30S ribosomal subunits. This chain is Ribosome maturation factor RimP, found in Clostridium botulinum (strain 657 / Type Ba4).